The chain runs to 101 residues: Small ribosomal subunit protein uS14 (101 aa).

The protein belongs to the universal ribosomal protein uS14 family. Part of the 30S ribosomal subunit. Contacts proteins S3 and S10.

Functionally, binds 16S rRNA, required for the assembly of 30S particles and may also be responsible for determining the conformation of the 16S rRNA at the A site. In Rhizorhabdus wittichii (strain DSM 6014 / CCUG 31198 / JCM 15750 / NBRC 105917 / EY 4224 / RW1) (Sphingomonas wittichii), this protein is Small ribosomal subunit protein uS14.